Consider the following 147-residue polypeptide: Diuretic hormone 45 (147 aa).

Positions 1 to 26 (MMWWAVWCAAMVAGSVFTAAAPPTDS) are cleaved as a signal peptide. Residues 27 to 84 (IDLMQMDPSLADDESLGFAMQSLSGRYAAAPWLYLLADVSHDPQRMAEFSQSSGRARP) constitute a propeptide that is removed on maturation. Position 131 is a valine amide (V131). Positions 135-147 (GAWGEPASYLYNN) are excised as a propeptide.

This sequence belongs to the sauvagine/corticotropin-releasing factor/urotensin I family.

Its subcellular location is the secreted. Its function is as follows. Regulation of fluid secretion. The sequence is that of Diuretic hormone 45 (dh45) from Bombyx mori (Silk moth).